Reading from the N-terminus, the 646-residue chain is Pentatricopeptide repeat-containing protein At5g48910 (646 aa).

The disordered stretch occupies residues 1–24 (MNPTQTLFSPGGNSPASSPASHPS). Over residues 9–24 (SPGGNSPASSPASHPS) the composition is skewed to low complexity. PPR repeat units lie at residues 54-88 (DTLA…MPQR), 89-126 (NCFS…FVEP), 127-161 (NRFT…GFGG), 162-197 (DEFV…DMVV), 207-237 (EIVL…MRQR), 238-272 (SVVS…DIRP), 273-307 (NYVT…GIRI), 308-338 (DDVL…LPRE), 339-373 (NVIT…GVRP), 374-409 (SDVA…GLEP), and 410-440 (RIEH…MPIK). The type E motif stretch occupies residues 445-520 (IWKALLGACR…DPGCSLIDID (76 aa)). Residues 521-551 (GVLHEFVVEDDSHPKAKEINSMLVEISDKLR) form a type E(+) motif region. Positions 552-646 (LAGYRPITTQ…DGSCSCMDYW (95 aa)) are type DYW motif.

The protein belongs to the PPR family. PCMP-H subfamily.

In Arabidopsis thaliana (Mouse-ear cress), this protein is Pentatricopeptide repeat-containing protein At5g48910 (PCMP-H38).